A 173-amino-acid polypeptide reads, in one-letter code: NADH-ubiquinone oxidoreductase chain 6 (173 aa).

The next 5 helical transmembrane spans lie at 1–21 (MTYF…AVAS), 27–47 (YGVL…LSLG), 48–68 (VSFI…VVFV), 87–107 (VVIY…VGDF), and 139–159 (WGAG…FVVL).

This sequence belongs to the complex I subunit 6 family.

It is found in the mitochondrion membrane. The enzyme catalyses a ubiquinone + NADH + 5 H(+)(in) = a ubiquinol + NAD(+) + 4 H(+)(out). In terms of biological role, core subunit of the mitochondrial membrane respiratory chain NADH dehydrogenase (Complex I) that is believed to belong to the minimal assembly required for catalysis. Complex I functions in the transfer of electrons from NADH to the respiratory chain. The immediate electron acceptor for the enzyme is believed to be ubiquinone. The chain is NADH-ubiquinone oxidoreductase chain 6 (MT-ND6) from Struthio camelus (Common ostrich).